A 428-amino-acid chain; its full sequence is Methyl-branched lipid omega-hydroxylase (428 aa).

Cys379 contributes to the heme binding site.

This sequence belongs to the cytochrome P450 family. The cofactor is heme.

The catalysed reaction is a methyl-branched lipid + O2 + 2 reduced ferredoxin [iron-sulfur] cluster + 2 H(+) = an omega-hydroxy-methyl-branched lipid + H2O + 2 oxidized ferredoxin [iron-sulfur] cluster.. The enzyme catalyses cholest-4-en-3-one + 6 reduced [2Fe-2S]-[ferredoxin] + 3 O2 + 5 H(+) = (25R)-3-oxocholest-4-en-26-oate + 6 oxidized [2Fe-2S]-[ferredoxin] + 4 H2O. The protein operates within lipid metabolism; branched-chain fatty acid metabolism. Its function is as follows. Primarily hydroxylates the omega-carbon of a number of methyl-branched lipids, including (2E,6E)-farnesol, phytanate, geranylgeraniol, 15-methylpalmitate and (2E,6E)-farnesyl diphosphate. Also catalyzes the sequential oxidation of the terminal methyl of cholest-4-en-3-one into (25R)-26-hydroxycholest-4-en-3-one (alcohol), (25R)-26-oxocholest-4-en-3-one (aldehyde), to finally yield the carboxylic acid (25R)-3-oxocholest-4-en-26-oate. Also able to sequentially oxidize cholesterol itself, not only cholest-4-en-3-one. The polypeptide is Methyl-branched lipid omega-hydroxylase (cyp124) (Mycobacterium tuberculosis (strain CDC 1551 / Oshkosh)).